The primary structure comprises 470 residues: MAQVTGKTLYEKVWDSHIVASPEGEAPVVYVDRHLVHEVTSPQAFSGLKVAGRKLRAPQKTFATMDHNTSTRSASLDALSPMARTQVETLAQNCKEFGVRLYDIHHPNQGIVHVMGPELGITLPGTVIVCGDSHTATHGAFGALAFGIGTSEVEHVLATQTLRQLKAKNMKVEVRGKVTDGVTAKDIVLAIIGKLGMDGGTGYVVEFCGEAIEALTMEGRMTLCNMAIEMGAKAGMVAPDETTFNYLKGREFAPKDAMWEQAVAAWSELKSDADAVFDVEVVLDANDIAPQLTWGTNPGQVVAIDGVVPNPETETNSTNRTSMIKALEYIGLTPGTKMTDISINKVFIGSCTNSRIEDLRSAAVHAKNRKVAEGVVAIVVPGSGQVKLQAEEEGLDKIFIEAGFEWRLPGCSMCLAMNDDRLDAGDRCASTSNRNFEGRQGRGSRTHLVSPAMAAAAAVAGHFVDIRKPY.

Positions 351, 411, and 414 each coordinate [4Fe-4S] cluster.

This sequence belongs to the aconitase/IPM isomerase family. LeuC type 1 subfamily. In terms of assembly, heterodimer of LeuC and LeuD. It depends on [4Fe-4S] cluster as a cofactor.

The catalysed reaction is (2R,3S)-3-isopropylmalate = (2S)-2-isopropylmalate. It participates in amino-acid biosynthesis; L-leucine biosynthesis; L-leucine from 3-methyl-2-oxobutanoate: step 2/4. Its function is as follows. Catalyzes the isomerization between 2-isopropylmalate and 3-isopropylmalate, via the formation of 2-isopropylmaleate. The sequence is that of 3-isopropylmalate dehydratase large subunit from Shewanella frigidimarina (strain NCIMB 400).